The primary structure comprises 213 residues: Uridine kinase (213 aa).

15–22 (GASASGKS) provides a ligand contact to ATP.

This sequence belongs to the uridine kinase family.

It localises to the cytoplasm. The enzyme catalyses uridine + ATP = UMP + ADP + H(+). The catalysed reaction is cytidine + ATP = CMP + ADP + H(+). It participates in pyrimidine metabolism; CTP biosynthesis via salvage pathway; CTP from cytidine: step 1/3. Its pathway is pyrimidine metabolism; UMP biosynthesis via salvage pathway; UMP from uridine: step 1/1. In Pectobacterium atrosepticum (strain SCRI 1043 / ATCC BAA-672) (Erwinia carotovora subsp. atroseptica), this protein is Uridine kinase.